The sequence spans 243 residues: Pyridoxine 5'-phosphate synthase (243 aa).

Asn-9 provides a ligand contact to 3-amino-2-oxopropyl phosphate. 11–12 serves as a coordination point for 1-deoxy-D-xylulose 5-phosphate; sequence DH. Arg-20 is a binding site for 3-amino-2-oxopropyl phosphate. The active-site Proton acceptor is His-45. The 1-deoxy-D-xylulose 5-phosphate site is built by Arg-47 and His-52. Residue Glu-72 is the Proton acceptor of the active site. 1-deoxy-D-xylulose 5-phosphate is bound at residue Thr-102. Residue His-193 is the Proton donor of the active site. 3-amino-2-oxopropyl phosphate is bound by residues Gly-194 and 215–216; that span reads GH.

This sequence belongs to the PNP synthase family. As to quaternary structure, homooctamer; tetramer of dimers.

Its subcellular location is the cytoplasm. The catalysed reaction is 3-amino-2-oxopropyl phosphate + 1-deoxy-D-xylulose 5-phosphate = pyridoxine 5'-phosphate + phosphate + 2 H2O + H(+). It functions in the pathway cofactor biosynthesis; pyridoxine 5'-phosphate biosynthesis; pyridoxine 5'-phosphate from D-erythrose 4-phosphate: step 5/5. Catalyzes the complicated ring closure reaction between the two acyclic compounds 1-deoxy-D-xylulose-5-phosphate (DXP) and 3-amino-2-oxopropyl phosphate (1-amino-acetone-3-phosphate or AAP) to form pyridoxine 5'-phosphate (PNP) and inorganic phosphate. In Yersinia pseudotuberculosis serotype I (strain IP32953), this protein is Pyridoxine 5'-phosphate synthase.